The chain runs to 945 residues: Netrin receptor UNC5B (945 aa).

Residues 1-26 form the signal peptide; it reads MRARSGVRSALLLALLLCWDPTPSLA. The Extracellular segment spans residues 27-377; it reads GVDSAGQVLP…LETSGDVALY (351 aa). Positions 48-145 constitute an Ig-like domain; it reads PYFLLEPQDA…SGTTKSRRAY (98 aa). Cystine bridges form between cysteine 69-cysteine 130, cysteine 81-cysteine 128, cysteine 174-cysteine 225, cysteine 258-cysteine 295, cysteine 262-cysteine 299, cysteine 273-cysteine 285, cysteine 314-cysteine 348, cysteine 318-cysteine 353, and cysteine 326-cysteine 338. The Ig-like C2-type domain maps to 153-242; that stretch reads KNFDQEPLAK…KRRSTTATVI (90 aa). A glycan (N-linked (GlcNAc...) asparagine) is linked at asparagine 222. TSP type-1 domains follow at residues 246 to 300 and 302 to 354; these read NGGW…TVCP and DGAW…GLCV. Asparagine 347 carries N-linked (GlcNAc...) asparagine glycosylation. A helical membrane pass occupies residues 378 to 398; the sequence is AGLVVAVFVVVAVLMAVGVIV. The Cytoplasmic segment spans residues 399–945; sequence YRRNCRDFDT…LVAMATDGDC (547 aa). A lipid anchor (S-palmitoyl cysteine) is attached at cysteine 403. In terms of domain architecture, ZU5 spans 543–686; sequence SSVSGTFGCL…LGTYVFMGES (144 aa). Tyrosine 581 bears the Phosphotyrosine mark. The UPA domain stretch occupies residues 689–838; it reads RSAVKRLQLA…AETPAGSLDA (150 aa). Positions 707–725 are interaction with DCC; that stretch reads SLEYSLRVYCLEDTPVALK. A Death domain is found at 865–943; it reads KICSSLDAPN…EMLVAMATDG (79 aa).

It belongs to the unc-5 family. As to quaternary structure, interacts with the cytoplasmic part of DCC. Interacts with GNAI2 via its cytoplasmic part. Interacts (via death domain) with DAPK1 (via death domain). Interacts (via extracellular domain) with FLRT2 and FLRT3 (via extracellular domain), but has higher affinity for FLRT3. Identified in a complex with FLRT3 and ADGRL3; does not interact with ADGRL3 by itself. Phosphorylated on cytoplasmic tyrosine residues. In terms of processing, palmitoylation is required for pro-apoptotic activity, but not for location at lipid rafts. Post-translationally, proteolytically cleaved by caspases during apoptosis. The cleavage does not take place when the receptor is associated with netrin ligand. Its cleavage by caspases is required to induce apoptosis. As to expression, highly expressed in brain. Expressed in lung during late development. Expressed during early blood vessel formation, in the semicircular canal and in a dorsal to ventral gradient in the retina.

It is found in the cell membrane. The protein localises to the membrane raft. In terms of biological role, receptor for netrin required for axon guidance. Mediates axon repulsion of neuronal growth cones in the developing nervous system upon ligand binding. Axon repulsion in growth cones may be caused by its association with DCC that may trigger signaling for repulsion. Functions as a netrin receptor that negatively regulates vascular branching during angiogenesis. Mediates retraction of tip cell filopodia on endothelial growth cones in response to netrin. It also acts as a dependence receptor required for apoptosis induction when not associated with netrin ligand. Mediates apoptosis by activating DAPK1. In the absence of NTN1, activates DAPK1 by reducing its autoinhibitory phosphorylation at Ser-308 thereby increasing its catalytic activity. In Mus musculus (Mouse), this protein is Netrin receptor UNC5B (Unc5b).